The following is a 218-amino-acid chain: N-(5'-phosphoribosyl)anthranilate isomerase (218 aa).

It belongs to the TrpF family.

It catalyses the reaction N-(5-phospho-beta-D-ribosyl)anthranilate = 1-(2-carboxyphenylamino)-1-deoxy-D-ribulose 5-phosphate. The protein operates within amino-acid biosynthesis; L-tryptophan biosynthesis; L-tryptophan from chorismate: step 3/5. The polypeptide is N-(5'-phosphoribosyl)anthranilate isomerase (Rhodopseudomonas palustris (strain BisA53)).